The chain runs to 431 residues: Trigger factor (431 aa).

Residues G158 to P243 form the PPIase FKBP-type domain.

Belongs to the FKBP-type PPIase family. Tig subfamily.

The protein resides in the cytoplasm. The catalysed reaction is [protein]-peptidylproline (omega=180) = [protein]-peptidylproline (omega=0). Functionally, involved in protein export. Acts as a chaperone by maintaining the newly synthesized protein in an open conformation. Functions as a peptidyl-prolyl cis-trans isomerase. The chain is Trigger factor from Stenotrophomonas maltophilia (strain K279a).